The sequence spans 396 residues: Ribosomal RNA large subunit methyltransferase I (396 aa).

Residues 2-79 (AIRIKLKPGR…REEEIDREFF (78 aa)) form the PUA domain.

It belongs to the methyltransferase superfamily. RlmI family.

It is found in the cytoplasm. It carries out the reaction cytidine(1962) in 23S rRNA + S-adenosyl-L-methionine = 5-methylcytidine(1962) in 23S rRNA + S-adenosyl-L-homocysteine + H(+). In terms of biological role, specifically methylates the cytosine at position 1962 (m5C1962) of 23S rRNA. This is Ribosomal RNA large subunit methyltransferase I from Shewanella oneidensis (strain ATCC 700550 / JCM 31522 / CIP 106686 / LMG 19005 / NCIMB 14063 / MR-1).